The sequence spans 633 residues: MVQMRSKNMAYESGTNNYSDTIANGNTLPPRSKKGHSGRRKRSETLPIACNNFCVTRQIDDDEQAFKMLDKVSHLKKFSAEDGDDNNIFVQWADDITDILFGLCCTGTFLKLLISSALSGRAKTWFDSTTEGIDDHVIKAYSFEKFLALLSEEFDGARSLRREIFTELLTLSIDSEKSLEAFAHKSGRLTPYYLSSGAALDLFLTKLEPQLQKQLENCAFPMTLNLALLITACEFAKRASNHKKYRYKNTRDSDICTPKSKNTAIVSKLSNTKTISKNKVIEKSDKKNYFDKNSQHIPDPKRRKQNEPGMRLFLVMDEEKNILTSRNVSANAYTSKNGHTNLSDLHTNLKNSKSQQCAVEPISILNSGSLVTGTINIDLINDEVLGTKEETTTYDERMDGNSRSLNERCCAVKKNSLQPITSNIFQKNAEIQGTKIGSVLDSGISNSFSSTEYMFPPTSSATVSNPVKKNEISKSSQVKDIAQFNPFMTNEKEKKLNPSESFKSPGVSMEINRLSRIAGLRNIPGNIYEDSKMLNLKTRKCYPLHNFAVRTRSAHFNDRPSNYISPHETINATLRSPASFDSIQCITRSKRVDAETNKATGSAKSENIETKSRKFPEVINPFLVNTTNKKESD.

Positions 12–43 are disordered; sequence ESGTNNYSDTIANGNTLPPRSKKGHSGRRKRS. Residues 13–29 show a composition bias toward polar residues; sequence SGTNNYSDTIANGNTLP. Positions 31–42 are enriched in basic residues; the sequence is RSKKGHSGRRKR. 2 helical membrane-spanning segments follow: residues 99-118 and 217-233; these read ILFGLCCTGTFLKLLISSAL and NCAFPMTLNLALLITAC. Residues 593–612 form a disordered region; sequence DAETNKATGSAKSENIETKS.

The protein resides in the membrane. This is an uncharacterized protein from Saccharomyces cerevisiae (strain ATCC 204508 / S288c) (Baker's yeast).